Consider the following 430-residue polypeptide: Gamma-glutamyl phosphate reductase (430 aa).

This sequence belongs to the gamma-glutamyl phosphate reductase family.

Its subcellular location is the cytoplasm. The enzyme catalyses L-glutamate 5-semialdehyde + phosphate + NADP(+) = L-glutamyl 5-phosphate + NADPH + H(+). Its pathway is amino-acid biosynthesis; L-proline biosynthesis; L-glutamate 5-semialdehyde from L-glutamate: step 2/2. Functionally, catalyzes the NADPH-dependent reduction of L-glutamate 5-phosphate into L-glutamate 5-semialdehyde and phosphate. The product spontaneously undergoes cyclization to form 1-pyrroline-5-carboxylate. The protein is Gamma-glutamyl phosphate reductase of Corynebacterium diphtheriae (strain ATCC 700971 / NCTC 13129 / Biotype gravis).